The primary structure comprises 346 residues: NADH-quinone oxidoreductase subunit H (346 aa).

Transmembrane regions (helical) follow at residues 6–26 (ILFWLLKSGLFFFILITACAY), 76–96 (VMYLIAPAISMTCAIMAWSVV), 128–148 (ILFLFAISSLAVYGIIIAGWA), 166–186 (ISYELPLGMSVVSIVILSGSL), 198–218 (LWNIFKLPGFIAFCLFVVAMF), 260–280 (ITMSCVVTLLFFGGYQVPFGI), 289–309 (LFGLVFFLGKVLFFTFLFLWV), and 324–344 (LGWKKLIPWAILNILIASIYI).

It belongs to the complex I subunit 1 family. NDH-1 is composed of 14 different subunits. Subunits NuoA, H, J, K, L, M, N constitute the membrane sector of the complex.

The protein localises to the cell inner membrane. The catalysed reaction is a quinone + NADH + 5 H(+)(in) = a quinol + NAD(+) + 4 H(+)(out). NDH-1 shuttles electrons from NADH, via FMN and iron-sulfur (Fe-S) centers, to quinones in the respiratory chain. The immediate electron acceptor for the enzyme in this species is believed to be ubiquinone. Couples the redox reaction to proton translocation (for every two electrons transferred, four hydrogen ions are translocated across the cytoplasmic membrane), and thus conserves the redox energy in a proton gradient. This subunit may bind ubiquinone. The protein is NADH-quinone oxidoreductase subunit H of Leptospira interrogans serogroup Icterohaemorrhagiae serovar copenhageni (strain Fiocruz L1-130).